Consider the following 260-residue polypeptide: Alpha- and beta-fibrinogenase OhS1 (260 aa).

A signal peptide spans 1–18 (MALIRVLASLLILQLSYA). The propeptide occupies 19–24 (VTPFDR). One can recognise a Peptidase S1 domain in the interval 25–248 (IIGGFECNEY…YIDWIEGIIA (224 aa)). Cystine bridges form between Cys-31/Cys-163, Cys-50/Cys-66, Cys-98/Cys-255, Cys-142/Cys-209, Cys-174/Cys-188, and Cys-199/Cys-224. Asn-44 carries N-linked (GlcNAc...) asparagine glycosylation. His-65 (charge relay system) is an active-site residue. Residue Asn-79 is glycosylated (N-linked (GlcNAc...) asparagine). The active-site Charge relay system is the Asp-110. 2 N-linked (GlcNAc...) asparagine glycosylation sites follow: Asn-117 and Asn-121. Ser-203 acts as the Charge relay system in catalysis. The N-linked (GlcNAc...) asparagine glycan is linked to Asn-250.

It belongs to the peptidase S1 family. Snake venom subfamily. In terms of assembly, monomer. As to expression, expressed by the venom gland.

It localises to the secreted. With respect to regulation, completely inhibited by NPGB, PMSF, diisopropylfluorophosphate (DFP), benzamidine and soybean trypsin inhibitor. Not inhibited by EDTA. In terms of biological role, snake venom serine protease that possesses potent fibrinogenolytic (on both alpha- (FGA) and beta-chains (FGB)) and amidolytic activities. Selectively cleaves Arg-|-Xaa or Lys-|-Xaa bonds. This Ophiophagus hannah (King cobra) protein is Alpha- and beta-fibrinogenase OhS1.